The chain runs to 427 residues: Intermediate conductance calcium-activated potassium channel protein 4 (427 aa).

A helical transmembrane segment spans residues 29–49 (ALVLAGTGIGLMVLHAEMLWF). Residues 59–79 (FLVKCTISISTFLLLCLIVAF) traverse the membrane as a helical segment. A helical membrane pass occupies residues 108 to 128 (IVLELVVCGLHPAPVRGPPCV). The helical transmembrane segment at 143–163 (GFLGQGEALLSLAMLLRLYLV) threads the bilayer. The helical transmembrane segment at 207-227 (LLLGLTLGLWLTTAWVLSVAE) threads the bilayer. Positions 241–261 (LWLIPITFLTIGYGDVVPGTM) form an intramembrane region, pore-forming. A helical transmembrane segment spans residues 265–285 (IVCLCTGVMGVCCTALLVAVV). Positions 286 to 347 (ARKLEFNKAE…RRHQRKLLAA (62 aa)) are calmodulin-binding. His-358 bears the Phosphohistidine mark.

The protein belongs to the potassium channel KCNN family. KCa3.1/KCNN4 subfamily. As to quaternary structure, homodimer. Homotetramer. Heterotetramer of potassium channel proteins. Interacts with MTMR6; this interaction leads to selective dephosphorylation of PI(3)P in a lipid microdomain adjacent to KCNN4, resulting in a decrease of intermediate conductance calcium-activated potassium channel activity. Interacts (via the C-tail domain) with CALM1; the calmodulin binding is constitutive, does not require calcium and mediates calcium-dependent gating and four calmodulin molecules bind to one channel tetramer. In terms of processing, phosphorylation at His-358 by NDKB activates the intermediate conductance calcium-activated potassium channel activity, and conversely it's dephosphorylation by PHPT1 inhibits this activity. Widely expressed in non-excitable tissues.

It is found in the cell membrane. The protein localises to the cell projection. The protein resides in the ruffle membrane. It carries out the reaction K(+)(in) = K(+)(out). Its activity is regulated as follows. The channel is inhibited by clotrimazole and charybdotoxin but is insensitive to apamin. In terms of biological role, intermediate conductance calcium-activated potassium channel that mediates the voltage-independent transmembrane transfer of potassium across the cell membrane through a constitutive interaction with calmodulin which binds the intracellular calcium allowing its opening. The current is characterized by a voltage-independent activation, an intracellular calcium concentration increase-dependent activation and a single-channel conductance of about 25 picosiemens. Also presents an inwardly rectifying current, thus reducing its already small outward conductance of potassium ions, which is particularly the case when the membrane potential displays positive values, above + 20 mV. Controls calcium influx during vascular contractility by being responsible of membrane hyperpolarization induced by vasoactive factors in proliferative vascular smooth muscle cell types. Following calcium influx, the consecutive activation of KCNN4 channel leads to a hyperpolarization of the cell membrane potential and hence an increase of the electrical driving force for further calcium influx promoting sustained calcium entry in response to stimulation with chemotactic peptides. Required for maximal calcium influx and proliferation during the reactivation of naive T-cells. Plays a role in the late stages of EGF-induced macropinocytosis through activation by PI(3)P. The protein is Intermediate conductance calcium-activated potassium channel protein 4 of Homo sapiens (Human).